A 538-amino-acid chain; its full sequence is Probable inorganic phosphate transporter 1-4 (538 aa).

Over 1–23 the chain is Cytoplasmic; that stretch reads MAGELKVLNALDSAKTQWYHFTA. A helical membrane pass occupies residues 24–44; it reads IVIAGMGFFTDAYDLFSISLV. The Extracellular portion of the chain corresponds to 45–69; the sequence is TKLLGRIYYFNPASKSPGSLPPNVS. Residues 70–90 form a helical membrane-spanning segment; that stretch reads AAVNGVAFCGTLAGQLFFGWL. Residues 91–98 lie on the Cytoplasmic side of the membrane; it reads GDKMGRKK. A helical transmembrane segment spans residues 99–119; that stretch reads VYGMTLMLMVICCLASGLSFG. Residues 120 to 123 are Extracellular-facing; the sequence is SSAK. Residues 124–144 form a helical membrane-spanning segment; the sequence is GVMATLCFFRFWLGFGIGGDY. Over 145–163 the chain is Cytoplasmic; it reads PLSATIMSEYANKRTRGAF. Residues 164 to 184 form a helical membrane-spanning segment; that stretch reads IAAVFAMQGFGNLTGGIVAII. The Extracellular segment spans residues 185–210; it reads VSAAFKARFDAPAYRDDRAGSTVPQA. Residues 211–231 form a helical membrane-spanning segment; that stretch reads DYAWRIVLMFGAIPALLTYYW. Over 232-294 the chain is Cytoplasmic; it reads RMKMPETARY…RQFLRRHGRH (63 aa). A helical membrane pass occupies residues 295-315; it reads LLGTTVCWFVLDIAFYSSNLF. Residues 316 to 346 are Extracellular-facing; that stretch reads QKDIYTAVQWLPKADTMSALEEMFKISRAQT. Residues 347–367 traverse the membrane as a helical segment; it reads LVALCGTIPGYWFTVFFIDII. Over 368-369 the chain is Cytoplasmic; it reads GR. Residues 370 to 390 traverse the membrane as a helical segment; sequence FVIQLGGFFFMTAFMLGLAVP. At 391–396 the chain is on the extracellular side; it reads YHHWTT. A helical membrane pass occupies residues 397 to 417; that stretch reads PGNHIGFVVMYAFTFFFANFG. Residues 418-440 are Cytoplasmic-facing; the sequence is PNSTTFIVPAEIFPARLRSTCHG. Residues 441-461 traverse the membrane as a helical segment; the sequence is ISAAAGKAGAIVGSFGFLYAA. Residues 462-481 lie on the Extracellular side of the membrane; that stretch reads QSTDASKTDAGYPPGIGVRN. A helical membrane pass occupies residues 482-502; it reads SLFFLAGCNVIGFFFTFLVPE. The Cytoplasmic portion of the chain corresponds to 503-538; the sequence is SKGKSLEELSGENEDDDDVPEAPSTADHRTAPAPPA. The disordered stretch occupies residues 507–538; that stretch reads SLEELSGENEDDDDVPEAPSTADHRTAPAPPA. The segment covering 511–522 has biased composition (acidic residues); that stretch reads LSGENEDDDDVP.

It belongs to the major facilitator superfamily. Phosphate:H(+) symporter (TC 2.A.1.9) family.

It localises to the membrane. In terms of biological role, high-affinity transporter for external inorganic phosphate. In Oryza sativa subsp. indica (Rice), this protein is Probable inorganic phosphate transporter 1-4 (PHT1-4).